The following is a 496-amino-acid chain: Putative aldehyde dehydrogenase-like protein C922.07c (496 aa).

241 to 246 (GSTKVG) contacts NAD(+). Glu263 (proton acceptor) is an active-site residue. The active-site Nucleophile is Cys297.

The protein belongs to the aldehyde dehydrogenase family.

The protein resides in the cytoplasm. The protein localises to the nucleus. In Schizosaccharomyces pombe (strain 972 / ATCC 24843) (Fission yeast), this protein is Putative aldehyde dehydrogenase-like protein C922.07c.